Here is a 436-residue protein sequence, read N- to C-terminus: Glutamyl-tRNA reductase (436 aa).

Substrate-binding positions include 50 to 53 (TCNR), Ser110, 115 to 117 (ETQ), and Gln121. Cys51 (nucleophile) is an active-site residue. Position 190–195 (190–195 (GLGEMS)) interacts with NADP(+).

Belongs to the glutamyl-tRNA reductase family. In terms of assembly, homodimer.

It carries out the reaction (S)-4-amino-5-oxopentanoate + tRNA(Glu) + NADP(+) = L-glutamyl-tRNA(Glu) + NADPH + H(+). It participates in porphyrin-containing compound metabolism; protoporphyrin-IX biosynthesis; 5-aminolevulinate from L-glutamyl-tRNA(Glu): step 1/2. In terms of biological role, catalyzes the NADPH-dependent reduction of glutamyl-tRNA(Glu) to glutamate 1-semialdehyde (GSA). The sequence is that of Glutamyl-tRNA reductase from Wolinella succinogenes (strain ATCC 29543 / DSM 1740 / CCUG 13145 / JCM 31913 / LMG 7466 / NCTC 11488 / FDC 602W) (Vibrio succinogenes).